A 317-amino-acid chain; its full sequence is R2-like ligand binding oxidase (317 aa).

Positions 73, 106, and 109 each coordinate Mn(2+). A cross-link (3-(O4'-tyrosyl)-valine (Val-Tyr)) is located at residues 76 to 167 (VTQDLQPFMA…ANQVRASVTY (92 aa)). Glutamate 106 serves as a coordination point for Fe cation. Fe cation is bound by residues glutamate 172, glutamate 207, and histidine 210.

The protein belongs to the ribonucleoside diphosphate reductase small chain family. R2-like ligand binding oxidase subfamily. As to quaternary structure, homodimer. Fe cation is required as a cofactor. The cofactor is Mn(2+).

Probable oxidase. In Saccharopolyspora erythraea (strain ATCC 11635 / DSM 40517 / JCM 4748 / NBRC 13426 / NCIMB 8594 / NRRL 2338), this protein is R2-like ligand binding oxidase.